A 247-amino-acid polypeptide reads, in one-letter code: ATP synthase subunit a, chloroplastic (247 aa).

5 helical membrane passes run 38–58 (QVLITSWVVIAILLGSASIAV), 95–115 (VPFIGTMFLFIFVSNWSGALL), 134–154 (INTTVALALLTSVAYFYAGLS), 199–219 (LVVVVLVSLVPSVVPIPVMFL), and 220–240 (GLFTSGIQALIFATLAAAYIG).

The protein belongs to the ATPase A chain family. In terms of assembly, F-type ATPases have 2 components, CF(1) - the catalytic core - and CF(0) - the membrane proton channel. CF(1) has five subunits: alpha(3), beta(3), gamma(1), delta(1), epsilon(1). CF(0) has four main subunits: a, b, b' and c.

Its subcellular location is the plastid. It is found in the chloroplast thylakoid membrane. In terms of biological role, key component of the proton channel; it plays a direct role in the translocation of protons across the membrane. The sequence is that of ATP synthase subunit a, chloroplastic from Oenothera argillicola (Appalachian evening primrose).